Consider the following 132-residue polypeptide: Small ribosomal subunit protein uS8 (132 aa).

It belongs to the universal ribosomal protein uS8 family. Part of the 30S ribosomal subunit. Contacts proteins S5 and S12.

Its function is as follows. One of the primary rRNA binding proteins, it binds directly to 16S rRNA central domain where it helps coordinate assembly of the platform of the 30S subunit. This Borreliella burgdorferi (strain ZS7) (Borrelia burgdorferi) protein is Small ribosomal subunit protein uS8.